The sequence spans 308 residues: tRNA pseudouridine synthase B (308 aa).

Asp49 functions as the Nucleophile in the catalytic mechanism.

This sequence belongs to the pseudouridine synthase TruB family. Type 1 subfamily.

The enzyme catalyses uridine(55) in tRNA = pseudouridine(55) in tRNA. In terms of biological role, responsible for synthesis of pseudouridine from uracil-55 in the psi GC loop of transfer RNAs. This is tRNA pseudouridine synthase B from Nitrosococcus oceani (strain ATCC 19707 / BCRC 17464 / JCM 30415 / NCIMB 11848 / C-107).